We begin with the raw amino-acid sequence, 294 residues long: 4-hydroxy-tetrahydrodipicolinate synthase (294 aa).

Residue Thr-47 coordinates pyruvate. Tyr-135 serves as the catalytic Proton donor/acceptor. Catalysis depends on Lys-163, which acts as the Schiff-base intermediate with substrate. Position 205 (Thr-205) interacts with pyruvate.

Belongs to the DapA family. In terms of assembly, homotetramer; dimer of dimers.

It is found in the cytoplasm. The enzyme catalyses L-aspartate 4-semialdehyde + pyruvate = (2S,4S)-4-hydroxy-2,3,4,5-tetrahydrodipicolinate + H2O + H(+). Its pathway is amino-acid biosynthesis; L-lysine biosynthesis via DAP pathway; (S)-tetrahydrodipicolinate from L-aspartate: step 3/4. Its function is as follows. Catalyzes the condensation of (S)-aspartate-beta-semialdehyde [(S)-ASA] and pyruvate to 4-hydroxy-tetrahydrodipicolinate (HTPA). This Rickettsia peacockii (strain Rustic) protein is 4-hydroxy-tetrahydrodipicolinate synthase.